The chain runs to 708 residues: Meiotic sister-chromatid recombination protein 6, mitochondrial (708 aa).

Residues 1–15 (MLSVRISARQCSVRG) constitute a mitochondrion transit peptide. Polar residues predominate over residues 19–36 (QANNVSQPAKDNATNGSD). Residues 19-44 (QANNVSQPAKDNATNGSDAATEKKGT) are disordered.

The protein resides in the mitochondrion. May be involved in the control of meiotic sister-chromatid recombination. This is Meiotic sister-chromatid recombination protein 6, mitochondrial (MSC6) from Kluyveromyces lactis (strain ATCC 8585 / CBS 2359 / DSM 70799 / NBRC 1267 / NRRL Y-1140 / WM37) (Yeast).